A 244-amino-acid polypeptide reads, in one-letter code: tRNA pseudouridine synthase A (244 aa).

The active-site Nucleophile is the Asp-52. Position 110 (Tyr-110) interacts with substrate.

The protein belongs to the tRNA pseudouridine synthase TruA family. Homodimer.

The enzyme catalyses uridine(38/39/40) in tRNA = pseudouridine(38/39/40) in tRNA. In terms of biological role, formation of pseudouridine at positions 38, 39 and 40 in the anticodon stem and loop of transfer RNAs. The chain is tRNA pseudouridine synthase A from Clostridium botulinum (strain Eklund 17B / Type B).